We begin with the raw amino-acid sequence, 382 residues long: Dual-specificity RNA methyltransferase RlmN (382 aa).

The Proton acceptor role is filled by Glu96. Residues 102–340 (QNGRGTLCVS…VTVRTTRGDD (239 aa)) form the Radical SAM core domain. Cys109 and Cys345 form a disulfide bridge. 3 residues coordinate [4Fe-4S] cluster: Cys116, Cys120, and Cys123. S-adenosyl-L-methionine-binding positions include 170–171 (GE), Ser202, 224–226 (SLH), and Asn302. Residue Cys345 is the S-methylcysteine intermediate of the active site.

Belongs to the radical SAM superfamily. RlmN family. [4Fe-4S] cluster serves as cofactor.

The protein resides in the cytoplasm. The enzyme catalyses adenosine(2503) in 23S rRNA + 2 reduced [2Fe-2S]-[ferredoxin] + 2 S-adenosyl-L-methionine = 2-methyladenosine(2503) in 23S rRNA + 5'-deoxyadenosine + L-methionine + 2 oxidized [2Fe-2S]-[ferredoxin] + S-adenosyl-L-homocysteine. It catalyses the reaction adenosine(37) in tRNA + 2 reduced [2Fe-2S]-[ferredoxin] + 2 S-adenosyl-L-methionine = 2-methyladenosine(37) in tRNA + 5'-deoxyadenosine + L-methionine + 2 oxidized [2Fe-2S]-[ferredoxin] + S-adenosyl-L-homocysteine. Functionally, specifically methylates position 2 of adenine 2503 in 23S rRNA and position 2 of adenine 37 in tRNAs. m2A2503 modification seems to play a crucial role in the proofreading step occurring at the peptidyl transferase center and thus would serve to optimize ribosomal fidelity. The protein is Dual-specificity RNA methyltransferase RlmN of Ectopseudomonas mendocina (strain ymp) (Pseudomonas mendocina).